The following is a 484-amino-acid chain: tRNA-2-methylthio-N(6)-dimethylallyladenosine synthase (484 aa).

Residues 36–153 enclose the MTTase N-terminal domain; it reads GKLYIKTHGC…LPELIRARRE (118 aa). Residues C45, C82, C116, C190, C194, and C197 each contribute to the [4Fe-4S] cluster site. The Radical SAM core domain maps to 176-415; sequence RAEGPSAFVS…HISAHAASIS (240 aa). The TRAM domain occupies 416 to 479; it reads QSMVGSVQRV…SNSLRGRIQL (64 aa). Residues 428–450 are disordered; it reads EGPSRRDPNELTGKSENMRPVNF.

The protein belongs to the methylthiotransferase family. MiaB subfamily. Monomer. It depends on [4Fe-4S] cluster as a cofactor.

The protein localises to the cytoplasm. The enzyme catalyses N(6)-dimethylallyladenosine(37) in tRNA + (sulfur carrier)-SH + AH2 + 2 S-adenosyl-L-methionine = 2-methylsulfanyl-N(6)-dimethylallyladenosine(37) in tRNA + (sulfur carrier)-H + 5'-deoxyadenosine + L-methionine + A + S-adenosyl-L-homocysteine + 2 H(+). Its function is as follows. Catalyzes the methylthiolation of N6-(dimethylallyl)adenosine (i(6)A), leading to the formation of 2-methylthio-N6-(dimethylallyl)adenosine (ms(2)i(6)A) at position 37 in tRNAs that read codons beginning with uridine. The chain is tRNA-2-methylthio-N(6)-dimethylallyladenosine synthase from Xanthomonas oryzae pv. oryzae (strain PXO99A).